The primary structure comprises 24 residues: Brevinin-1 (24 aa).

Cys18 and Cys24 form a disulfide bridge.

It belongs to the frog skin active peptide (FSAP) family. Brevinin subfamily. As to expression, expressed by the skin glands.

The protein localises to the secreted. Functionally, shows antibacterial activity against representative Gram-negative and Gram-positive bacterial species, and a very high hemolytic activity. This is Brevinin-1 from Pelophylax porosus brevipodus (Nagoya Daruma pond frog).